A 351-amino-acid polypeptide reads, in one-letter code: tRNA pseudouridine synthase D (351 aa).

Asp-81 serves as the catalytic Nucleophile. The TRUD domain occupies 158–304; sequence GVPNYFGSQR…MRHERRAIEL (147 aa).

The protein belongs to the pseudouridine synthase TruD family.

It catalyses the reaction uridine(13) in tRNA = pseudouridine(13) in tRNA. Its function is as follows. Responsible for synthesis of pseudouridine from uracil-13 in transfer RNAs. This Aliivibrio fischeri (strain ATCC 700601 / ES114) (Vibrio fischeri) protein is tRNA pseudouridine synthase D.